The chain runs to 776 residues: Ecdysone receptor (776 aa).

The interval 1-290 is modulating; that stretch reads MYRLNIVSTN…GPTPRQQEEL (290 aa). The segment at 199–283 is disordered; that stretch reads NEEWISSPSP…DAKKQKKGPT (85 aa). A compositionally biased stretch (low complexity) spans 204-213; it reads SSPSPGSVPG. Polar residues-rich tracts occupy residues 227 to 245 and 261 to 270; these read TTYT…STGS and SPSSSLNGYT. The segment at residues 288–363 is a DNA-binding region (nuclear receptor); that stretch reads EELCLVCGDR…VGMRPECVVP (76 aa). NR C4-type zinc fingers lie at residues 291 to 311 and 327 to 346; these read CLVC…CEGC and CKFG…CQEC. Residues 437 to 673 form the NR LBD domain; that stretch reads NQMAVIYKLI…FLEEIWDVQD (237 aa). The segment covering 679 to 688 has biased composition (polar residues); the sequence is QAQMHSHGTQ. The segment at 679 to 776 is disordered; it reads QAQMHSHGTQ…VPGLGMLDQV (98 aa). A compositionally biased stretch (low complexity) spans 689–745; the sequence is SSSSSSSSSSSSSNGSSNGNSSSNSNSSQHGPHPHPHGQQLTPNQQQHQQQHSQLQQ.

Belongs to the nuclear hormone receptor family. NR1 subfamily. Heterodimer of USP and ECR. Only the heterodimer is capable of high-affinity binding to ecdysone. In terms of tissue distribution, a peak level expression is seen in the fat body of previtellogenic female mosquitos at one and two days after eclosion, levels fall three-fold at three days posteclosion.

It is found in the nucleus. Its function is as follows. Receptor for ecdysone. Binds to ecdysone response elements (ECRES). The sequence is that of Ecdysone receptor (EcR) from Aedes aegypti (Yellowfever mosquito).